We begin with the raw amino-acid sequence, 333 residues long: Fibronectin type III domain-containing protein 11 (333 aa).

Residues 212 to 310 (PVMFDRKESV…DSLTLHTRPG (99 aa)) enclose the Fibronectin type-III domain. Residues 307-333 (TRPGPPEGLAPSRLGKLGLSLTTPSER) form a disordered region.

This is Fibronectin type III domain-containing protein 11 from Bos taurus (Bovine).